Consider the following 496-residue polypeptide: MKKYILSLDQGTTSSRAILFNKKGEIVHSAQKEFTQHFPKPGWVEHNAQEIWGSILAVIATCLSEADVKPEQIAGIGITNQRETAVVWDKTTGKPIYNAIVWQSRQTAEICDELKEKGYGEMVREKTGLLIDAYFSGTKVKWILDNVEGAREKAENGDLLFGTIDTWLVWKLSGGKAHVTDYSNASRTLMFNIHDLQWDDELLDMLTVPKSMLPEVRPSSEVYGETIDYHFFGQNVPIAGVAGDQQAALFGQACFGEGMAKNTYGTGCFMLMNTGEKAVASEHGLLTTIAWGIDGKVNYALEGSIFVAGSAIQWLRDGMRMFKDASESEVYASRVESTDGVYVVPAFVGLGTPYWDSEVRGAMFGVTRGTTKEHFIRATLESLAYQTKDVLCAMEADSGIELKTLRVDGGAVKNNFLMKFQSDILDVPVERPVINETTALGAAYLAGLAVGYWKNQDEIKEQWHMDKRFEPTMEAETSEELYAGWKKAIEATKAFK.

Threonine 12 contributes to the ADP binding site. Residues threonine 12, threonine 13, and serine 14 each contribute to the ATP site. Threonine 12 is a sn-glycerol 3-phosphate binding site. ADP is bound at residue arginine 16. Arginine 82, glutamate 83, and tyrosine 134 together coordinate sn-glycerol 3-phosphate. Positions 82, 83, and 134 each coordinate glycerol. Position 230 is a phosphohistidine; by HPr (histidine 230). Position 244 (aspartate 244) interacts with sn-glycerol 3-phosphate. Glycerol contacts are provided by aspartate 244 and glutamine 245. 2 residues coordinate ADP: threonine 266 and glycine 309. 4 residues coordinate ATP: threonine 266, glycine 309, glutamine 313, and glycine 410. Residues glycine 410 and asparagine 414 each contribute to the ADP site.

It belongs to the FGGY kinase family. In terms of assembly, homotetramer and homodimer (in equilibrium). The phosphoenolpyruvate-dependent sugar phosphotransferase system (PTS), including enzyme I, and histidine-containing protein (HPr) are required for the phosphorylation, which leads to the activation of the enzyme.

It carries out the reaction glycerol + ATP = sn-glycerol 3-phosphate + ADP + H(+). It participates in polyol metabolism; glycerol degradation via glycerol kinase pathway; sn-glycerol 3-phosphate from glycerol: step 1/1. Its activity is regulated as follows. Activated by phosphorylation and inhibited by fructose 1,6-bisphosphate (FBP). In terms of biological role, key enzyme in the regulation of glycerol uptake and metabolism. Catalyzes the phosphorylation of glycerol to yield sn-glycerol 3-phosphate. The protein is Glycerol kinase of Bacillus thuringiensis (strain Al Hakam).